Consider the following 181-residue polypeptide: Shikimate kinase (181 aa).

11-16 contributes to the ATP binding site; sequence GAGKSK. Ser-15 is a Mg(2+) binding site. Substrate-binding residues include Asp-33, Arg-58, and Gly-80. ATP is bound at residue Arg-128. Arg-144 is a binding site for substrate.

This sequence belongs to the shikimate kinase family. Monomer. Mg(2+) serves as cofactor.

Its subcellular location is the cytoplasm. The catalysed reaction is shikimate + ATP = 3-phosphoshikimate + ADP + H(+). The protein operates within metabolic intermediate biosynthesis; chorismate biosynthesis; chorismate from D-erythrose 4-phosphate and phosphoenolpyruvate: step 5/7. Its function is as follows. Catalyzes the specific phosphorylation of the 3-hydroxyl group of shikimic acid using ATP as a cosubstrate. The chain is Shikimate kinase from Leptospira biflexa serovar Patoc (strain Patoc 1 / Ames).